Consider the following 282-residue polypeptide: Nucleotide-binding protein PXO_02223 (282 aa).

5–12 (GLSGSGKS) contributes to the ATP binding site. 57–60 (DVRS) is a binding site for GTP.

The protein belongs to the RapZ-like family.

In terms of biological role, displays ATPase and GTPase activities. The chain is Nucleotide-binding protein PXO_02223 from Xanthomonas oryzae pv. oryzae (strain PXO99A).